Consider the following 226-residue polypeptide: UPF0173 metal-dependent hydrolase GTNG_2675 (226 aa).

It belongs to the UPF0173 family.

This chain is UPF0173 metal-dependent hydrolase GTNG_2675, found in Geobacillus thermodenitrificans (strain NG80-2).